An 887-amino-acid chain; its full sequence is Endoglucanase 1 (887 aa).

Positions Met1 to Asn55 are cleaved as a signal peptide. Positions Leu40 to Ile66 are disordered. Basic and acidic residues predominate over residues Val43–Ala53. Residues Lys56–Ser518 form a catalytic region. The active-site Nucleophile is the Asp131. Positions Glu441–Gln460 are disordered. Catalysis depends on residues His448, Asp486, and Glu495. A CBM3 1 domain is found at Val529 to Gly684. The tract at residues Gly684–Val730 is disordered. The segment covering Ala686–Ser729 has biased composition (polar residues). The region spanning Ile736–Pro887 is the CBM3 2 domain.

This sequence belongs to the glycosyl hydrolase 9 (cellulase E) family.

It carries out the reaction Endohydrolysis of (1-&gt;4)-beta-D-glucosidic linkages in cellulose, lichenin and cereal beta-D-glucans.. It functions in the pathway glycan metabolism; cellulose degradation. Functionally, this enzyme catalyzes the endohydrolysis of 1,4-beta-glucosidic linkages in cellulose, lichenin and cereal beta-D-glucans. Principally active against barley beta-glucan. The protein is Endoglucanase 1 (celI) of Acetivibrio thermocellus (strain ATCC 27405 / DSM 1237 / JCM 9322 / NBRC 103400 / NCIMB 10682 / NRRL B-4536 / VPI 7372) (Clostridium thermocellum).